A 181-amino-acid polypeptide reads, in one-letter code: MDDLTAQALKDFTARYCDAWHEEHKSWPLSEELYGVPSPCIISTTEDAIYWQPQPFTGEQNVNAVERAFDIVIQPTIHTFYTTQFAGDMHAQFGDIKLTLLQTWSEDDFRRVQENLIGHLVTQKRLKLPPTLFIATLEEELEVISVCNLSGEVCKETLGTRKRTHLASNLAEFLNQLKPLL.

It belongs to the Syd family.

It localises to the cell inner membrane. Functionally, interacts with the SecY protein in vivo. May bind preferentially to an uncomplexed state of SecY, thus functioning either as a chelating agent for excess SecY in the cell or as a regulatory factor that negatively controls the translocase function. The protein is Protein Syd of Escherichia coli O81 (strain ED1a).